A 179-amino-acid polypeptide reads, in one-letter code: Large ribosomal subunit protein uL6 (179 aa).

Belongs to the universal ribosomal protein uL6 family. Part of the 50S ribosomal subunit.

Its function is as follows. This protein binds to the 23S rRNA, and is important in its secondary structure. It is located near the subunit interface in the base of the L7/L12 stalk, and near the tRNA binding site of the peptidyltransferase center. The protein is Large ribosomal subunit protein uL6 of Mycobacterium ulcerans (strain Agy99).